A 444-amino-acid polypeptide reads, in one-letter code: Phosphoglucosamine mutase (444 aa).

The Phosphoserine intermediate role is filled by Ser-101. Ser-101, Asp-240, Asp-242, and Asp-244 together coordinate Mg(2+). Residue Ser-101 is modified to Phosphoserine.

The protein belongs to the phosphohexose mutase family. Mg(2+) serves as cofactor. Post-translationally, activated by phosphorylation.

It carries out the reaction alpha-D-glucosamine 1-phosphate = D-glucosamine 6-phosphate. Catalyzes the conversion of glucosamine-6-phosphate to glucosamine-1-phosphate. The polypeptide is Phosphoglucosamine mutase (Aeromonas hydrophila subsp. hydrophila (strain ATCC 7966 / DSM 30187 / BCRC 13018 / CCUG 14551 / JCM 1027 / KCTC 2358 / NCIMB 9240 / NCTC 8049)).